The sequence spans 1002 residues: Calmin (1002 aa).

The tract at residues 1–288 (MAAHEWDWFQ…IMTYVAQFLE (288 aa)) is actin-binding. The 108-residue stretch at 32–139 (NVQKRTFTRW…LIWNIILFFQ (108 aa)) folds into the Calponin-homology (CH) 1 domain. Positions 149–168 (RNSPSSSLSPGSGGTDSDSS) are enriched in low complexity. A disordered region spans residues 149-180 (RNSPSSSLSPGSGGTDSDSSFPPTPTAERSVA). In terms of domain architecture, Calponin-homology (CH) 2 spans 187–291 (RKAIKALLAW…YVAQFLERFP (105 aa)). A phosphoserine mark is found at Ser-301 and Ser-402. Disordered regions lie at residues 389–418 (QGGP…GRSN), 500–532 (NNNS…GENT), 581–716 (NKVP…SPPL), and 749–911 (DLKN…DSSI). Low complexity predominate over residues 396 to 409 (SDISEPSPESSILS). Over residues 500–509 (NNNSQSSSCN) the composition is skewed to polar residues. A compositionally biased stretch (basic and acidic residues) spans 585-606 (SPHETKPDEDAEAFENHAEKLG). Over residues 607–617 (KRSIKSAHKKK) the composition is skewed to basic residues. Composition is skewed to basic and acidic residues over residues 618–635 (DSPE…HQDS) and 650–659 (PVDKKPEVHE). Residue Ser-619 is modified to Phosphoserine. The segment covering 681-697 (GVGEELSSSPPSSCVSL) has biased composition (low complexity). At Thr-699 the chain carries Phosphothreonine. Phosphoserine is present on residues Ser-713 and Ser-769. A compositionally biased stretch (low complexity) spans 776 to 794 (GSQSSSSSSVPGESLPSAS). Basic and acidic residues predominate over residues 818–834 (PHEDHQQRETKENDPMD). Residues 835-846 (SHQSQESPNLEN) are compositionally biased toward polar residues. Phosphoserine occurs at positions 838 and 841. Basic and acidic residues predominate over residues 854-863 (NVTKESISSK). Residues 898–910 (YSIPSRTSHSDSS) show a composition bias toward polar residues. Phosphoserine is present on Ser-907. Residues 977-997 (MMYFILFLWLLVYCLLLFPQL) form a helical; Anchor for type IV membrane protein membrane-spanning segment.

In terms of tissue distribution, widely expressed at intermediate level.

It localises to the membrane. The sequence is that of Calmin (CLMN) from Homo sapiens (Human).